Here is a 58-residue protein sequence, read N- to C-terminus: Enterocin-HF (58 aa).

Residues 1–15 constitute a propeptide that is removed on maturation; sequence MEKLTVKEMSQVVGG. Cys-24 and Cys-29 are disulfide-bonded.

The protein resides in the secreted. Its function is as follows. Bacteriocin. This chain is Enterocin-HF (entHF), found in Enterococcus faecium (Streptococcus faecium).